The sequence spans 282 residues: Ribosomal RNA small subunit methyltransferase A (282 aa).

Residues His11, Leu13, Gly44, Glu65, Asp90, and Asn106 each contribute to the S-adenosyl-L-methionine site.

It belongs to the class I-like SAM-binding methyltransferase superfamily. rRNA adenine N(6)-methyltransferase family. RsmA subfamily.

The protein resides in the cytoplasm. It carries out the reaction adenosine(1518)/adenosine(1519) in 16S rRNA + 4 S-adenosyl-L-methionine = N(6)-dimethyladenosine(1518)/N(6)-dimethyladenosine(1519) in 16S rRNA + 4 S-adenosyl-L-homocysteine + 4 H(+). Specifically dimethylates two adjacent adenosines (A1518 and A1519) in the loop of a conserved hairpin near the 3'-end of 16S rRNA in the 30S particle. May play a critical role in biogenesis of 30S subunits. The protein is Ribosomal RNA small subunit methyltransferase A of Synechococcus sp. (strain JA-2-3B'a(2-13)) (Cyanobacteria bacterium Yellowstone B-Prime).